A 494-amino-acid polypeptide reads, in one-letter code: Acetylcholine receptor subunit epsilon (494 aa).

The first 20 residues, 1 to 20, serve as a signal peptide directing secretion; the sequence is MTMALLGTLLLLALFGRSQG. Over 21–239 the chain is Extracellular; it reads KNEELSLYHH…VIYTLIIRRK (219 aa). N-linked (GlcNAc...) asparagine glycosylation is found at N86 and N161. C148 and C162 are disulfide-bonded. Residues 240-264 traverse the membrane as a helical segment; that stretch reads PLFYVINIIVPCVLISGLVLLAYFL. Residues 265 to 272 lie on the Cytoplasmic side of the membrane; sequence PAQAGGQK. The helical transmembrane segment at 273 to 291 threads the bilayer; it reads CTVSINVLLAQTVFLFLIA. The Extracellular segment spans residues 292 to 306; that stretch reads QKIPETSLSVPLLGR. A helical membrane pass occupies residues 307 to 328; it reads YLIFVMVVATLIVMNCVIVLNV. Over 329 to 457 the chain is Cytoplasmic; it reads SLRTPTTHAT…WVRMGKALDN (129 aa). A helical membrane pass occupies residues 458 to 481; the sequence is VCFWAALVLFSVGSTLIFLGGYFN. At 482–494 the chain is on the extracellular side; that stretch reads QVPDLPYPPCIQP.

Belongs to the ligand-gated ion channel (TC 1.A.9) family. Acetylcholine receptor (TC 1.A.9.1) subfamily. Epsilon/CHRNE sub-subfamily. In terms of assembly, pentamer of two alpha chains, and one each of the beta, delta, and gamma (in immature muscle) or epsilon (in mature muscle) chains. The muscle heteropentamer composed of alpha-1, beta-1, delta, epsilon subunits interacts with the alpha-conotoxin ImII.

It is found in the postsynaptic cell membrane. Its subcellular location is the cell membrane. The enzyme catalyses K(+)(in) = K(+)(out). It carries out the reaction Na(+)(in) = Na(+)(out). In terms of biological role, after binding acetylcholine, the AChR responds by an extensive change in conformation that affects all subunits and leads to opening of an ion-conducting channel across the plasma membrane. The chain is Acetylcholine receptor subunit epsilon (Chrne) from Rattus norvegicus (Rat).